A 108-amino-acid chain; its full sequence is Tyrosine-protein phosphatase 5 (108 aa).

One can recognise a Tyrosine-protein phosphatase domain in the interval 1–108; the sequence is QESTVIVMLT…QGNNPSPIIV (108 aa). A substrate-binding site is contributed by Asp78.

It belongs to the protein-tyrosine phosphatase family.

The catalysed reaction is O-phospho-L-tyrosyl-[protein] + H2O = L-tyrosyl-[protein] + phosphate. The polypeptide is Tyrosine-protein phosphatase 5 (STY-5) (Styela plicata (Wrinkled sea squirt)).